The primary structure comprises 432 residues: Putative D-alanyl-D-alanine carboxypeptidase (432 aa).

A helical; Signal-anchor membrane pass occupies residues 7–25 (ATVLLTFSLSAFAVEYPVL).

Belongs to the peptidase S12 family. YfeW subfamily.

Its subcellular location is the cell inner membrane. The catalysed reaction is Preferential cleavage: (Ac)2-L-Lys-D-Ala-|-D-Ala. Also transpeptidation of peptidyl-alanyl moieties that are N-acyl substituents of D-alanine.. This Salmonella heidelberg (strain SL476) protein is Putative D-alanyl-D-alanine carboxypeptidase.